Consider the following 358-residue polypeptide: MRATPLAAPAGSLSRKKRLELDDNLDTERPVQKRARSGPQPRLPPCLLPLSPPTAPDRATAVATASRLGPYVLLEPEEGGRAYQALHCPTGTEYTCKVYPVQEALAVLEPYARLPPHKHVARPTEVLAGTQLLYAFFTRTHGDMHSLVRSRHRIPEPEAAVLFRQMATALAHCHQHGLVLRDLKLCRFVFADRERKKLVLENLEDSCVLTGPDDSLWDKHACPAYVGPEILSSRASYSGKAADVWSLGVALFTMLAGHYPFQDSEPVLLFGKIRRGAYALPAGLSAPARCLVRCLLRREPAERLTATGILLHPWLRQDPMPLAPTRSHLWEAAQVVPDGLGLDEAREEEGDREVVLYG.

The tract at residues M1 to T54 is disordered. Residues M1–L127 form an interaction with DDIT3/CHOP region. S12 is modified (phosphoserine). Pro residues predominate over residues P41 to T54. Residues L68–R316 form the Protein kinase domain.

Belongs to the protein kinase superfamily. CAMK Ser/Thr protein kinase family. Tribbles subfamily. In terms of assembly, interacts with AKT1, AKT2, MAP2K1 and MAP2K7. Interacts with ATF4. Interacts with DDIT3/CHOP and inhibits its interaction with EP300/P300. Interacts with APOBEC3C. Interacts (via N-terminus) with APOBEC3A. Interacts with RELA. As to expression, highest expression in liver, pancreas, peripheral blood leukocytes and bone marrow. Also highly expressed in a number of primary lung, colon and breast tumors. Expressed in spleen, thymus, and prostate and is undetectable in other examined tissues, including testis, ovary, small intestine, colon, leukocyte, heart, brain, placenta, lung, skeletal muscle, and kidney.

Its subcellular location is the nucleus. Its function is as follows. Inactive protein kinase which acts as a regulator of the integrated stress response (ISR), a process for adaptation to various stress. Inhibits the transcriptional activity of DDIT3/CHOP and is involved in DDIT3/CHOP-dependent cell death during ER stress. May play a role in programmed neuronal cell death but does not appear to affect non-neuronal cells. Acts as a negative feedback regulator of the ATF4-dependent transcription during the ISR: while TRIB3 expression is promoted by ATF4, TRIB3 protein interacts with ATF4 and inhibits ATF4 transcription activity. Disrupts insulin signaling by binding directly to Akt kinases and blocking their activation. May bind directly to and mask the 'Thr-308' phosphorylation site in AKT1. Interacts with the NF-kappa-B transactivator p65 RELA and inhibits its phosphorylation and thus its transcriptional activation activity. Interacts with MAPK kinases and regulates activation of MAP kinases. Can inhibit APOBEC3A editing of nuclear DNA. The protein is Tribbles homolog 3 (TRIB3) of Homo sapiens (Human).